The sequence spans 330 residues: tRNA dimethylallyltransferase (330 aa).

Positions 1 to 11 are enriched in polar residues; it reads MDYSHSDSPST. Residues 1–21 form a disordered region; sequence MDYSHSDSPSTAPAGKTPVDQ. An ATP-binding site is contributed by 29–36; it reads GPTGAGKS. 31-36 is a binding site for substrate; it reads TGAGKS. Residues 56 to 59 are interaction with substrate tRNA; that stretch reads DSMQ.

It belongs to the IPP transferase family. As to quaternary structure, monomer. It depends on Mg(2+) as a cofactor.

It carries out the reaction adenosine(37) in tRNA + dimethylallyl diphosphate = N(6)-dimethylallyladenosine(37) in tRNA + diphosphate. Its function is as follows. Catalyzes the transfer of a dimethylallyl group onto the adenine at position 37 in tRNAs that read codons beginning with uridine, leading to the formation of N6-(dimethylallyl)adenosine (i(6)A). This is tRNA dimethylallyltransferase from Corynebacterium urealyticum (strain ATCC 43042 / DSM 7109).